A 417-amino-acid polypeptide reads, in one-letter code: MLKREMNIADYDAELWQAMEQEKVRQEEHIELIASENYTSPRVMQAQGSQLTNKYAEGYPGKRYYGGCEYVDIVEQLAIDRAKELFGADYANVQPHSGSQANFAVYTALLEPGDTVLGMNLAHGGHLTHGSPVNFSGKLYNIVPYGIDASGHIDYADLEKQAKEHKPKMIIGGFSAYSGVVDWAKMREIADSIGAYLFVDMAHVAGLVAAGVYPNPVPHAHVVTTTTHKTLAGPRGGLILAKGGSEELYKKLNSAVFPGGQGGPLMHVIAGKAVALKEAMEPEFKTYQQQVAKNAKAMVEVFLERGYKVVSGGTDNHLFLVDLVDKNLTGKEADAALGRANITVNKNSVPNDPKSPFVTSGIRVGTPAITRRGFKEAEAKELAGWMCDVLDSINDEAVIERIKGKVLDICARYPVYA.

Residue Lys54 is modified to N6-acetyllysine. (6S)-5,6,7,8-tetrahydrofolate-binding positions include Leu121 and 125-127 (GHL). Lys229 is modified (N6-(pyridoxal phosphate)lysine). Residues Lys250, Lys285, and Lys354 each carry the N6-acetyllysine modification. 355 to 357 (SPF) contributes to the (6S)-5,6,7,8-tetrahydrofolate binding site. Lys375 is modified (N6-acetyllysine).

The protein belongs to the SHMT family. As to quaternary structure, homodimer. Pyridoxal 5'-phosphate is required as a cofactor.

It is found in the cytoplasm. It catalyses the reaction (6R)-5,10-methylene-5,6,7,8-tetrahydrofolate + glycine + H2O = (6S)-5,6,7,8-tetrahydrofolate + L-serine. The protein operates within one-carbon metabolism; tetrahydrofolate interconversion. It functions in the pathway amino-acid biosynthesis; glycine biosynthesis; glycine from L-serine: step 1/1. Catalyzes the reversible interconversion of serine and glycine with tetrahydrofolate (THF) serving as the one-carbon carrier. This reaction serves as the major source of one-carbon groups required for the biosynthesis of purines, thymidylate, methionine, and other important biomolecules. Also exhibits THF-independent aldolase activity toward beta-hydroxyamino acids, producing glycine and aldehydes, via a retro-aldol mechanism. In Escherichia coli O17:K52:H18 (strain UMN026 / ExPEC), this protein is Serine hydroxymethyltransferase.